The sequence spans 685 residues: Translation factor GUF1 homolog, mitochondrial (685 aa).

The N-terminal 54 residues, Met1 to Ile54, are a transit peptide targeting the mitochondrion. One can recognise a tr-type G domain in the interval Asp68–Gln267. Residues Ala77 to Thr84, Asp160 to His164, and Asn214 to Asp217 contribute to the GTP site.

Belongs to the TRAFAC class translation factor GTPase superfamily. Classic translation factor GTPase family. LepA subfamily.

It localises to the mitochondrion inner membrane. The enzyme catalyses GTP + H2O = GDP + phosphate + H(+). In terms of biological role, promotes mitochondrial protein synthesis. May act as a fidelity factor of the translation reaction, by catalyzing a one-codon backward translocation of tRNAs on improperly translocated ribosomes. Binds to mitochondrial ribosomes in a GTP-dependent manner. This chain is Translation factor GUF1 homolog, mitochondrial (guf1), found in Dictyostelium discoideum (Social amoeba).